We begin with the raw amino-acid sequence, 241 residues long: MSQVKYNRIILKISGEALAGEKGTGIDPTVIKKLAHEIKLVHDMGVQIGVVCGGGNMWRGETGAKLGMERAQADYMGMLATIMNGLALQDGLETAGVQTRLQTSISMRQVAEPYIRRVAISHMEKNRVVIFGGGTGNPYFSTDTTAALRAAEINADVILMAKNGVDGVYTADPNLDPSAKKFAELTQLDMISKGLQVMDRTASSLSMDTHIPLIVFNVNTPGNIKRVVEGENIGTIIRGDK.

12–15 (KISG) is a binding site for ATP. The segment at 20–25 (GEKGTG) is involved in allosteric activation by GTP. Gly54 is a binding site for UMP. Residues Gly55 and Arg59 each contribute to the ATP site. UMP-binding positions include Asp74 and 135–142 (TGNPYFST). ATP-binding residues include Asn163, Tyr169, and Asp172.

It belongs to the UMP kinase family. As to quaternary structure, homohexamer.

It localises to the cytoplasm. It carries out the reaction UMP + ATP = UDP + ADP. The protein operates within pyrimidine metabolism; CTP biosynthesis via de novo pathway; UDP from UMP (UMPK route): step 1/1. Its activity is regulated as follows. Allosterically activated by GTP. Inhibited by UTP. Functionally, catalyzes the reversible phosphorylation of UMP to UDP. The polypeptide is Uridylate kinase (Lactobacillus delbrueckii subsp. bulgaricus (strain ATCC 11842 / DSM 20081 / BCRC 10696 / JCM 1002 / NBRC 13953 / NCIMB 11778 / NCTC 12712 / WDCM 00102 / Lb 14)).